A 143-amino-acid chain; its full sequence is Anti-sigma F factor (143 aa).

Belongs to the anti-sigma-factor family.

The catalysed reaction is L-seryl-[protein] + ATP = O-phospho-L-seryl-[protein] + ADP + H(+). The enzyme catalyses L-threonyl-[protein] + ATP = O-phospho-L-threonyl-[protein] + ADP + H(+). Binds to sigma F and blocks its ability to form an RNA polymerase holoenzyme (E-sigma F). Phosphorylates SpoIIAA on a serine residue. This phosphorylation may enable SpoIIAA to act as an anti-anti-sigma factor that counteracts SpoIIAB and thus releases sigma F from inhibition. This is Anti-sigma F factor from Clostridium acetobutylicum (strain ATCC 824 / DSM 792 / JCM 1419 / IAM 19013 / LMG 5710 / NBRC 13948 / NRRL B-527 / VKM B-1787 / 2291 / W).